The primary structure comprises 342 residues: DNA-directed RNA polymerase subunit alpha (342 aa).

Residues Met1 to Asp238 are alpha N-terminal domain (alpha-NTD). The segment at Phe254 to Ile342 is alpha C-terminal domain (alpha-CTD).

This sequence belongs to the RNA polymerase alpha chain family. In terms of assembly, homodimer. The RNAP catalytic core consists of 2 alpha, 1 beta, 1 beta' and 1 omega subunit. When a sigma factor is associated with the core the holoenzyme is formed, which can initiate transcription.

It carries out the reaction RNA(n) + a ribonucleoside 5'-triphosphate = RNA(n+1) + diphosphate. In terms of biological role, DNA-dependent RNA polymerase catalyzes the transcription of DNA into RNA using the four ribonucleoside triphosphates as substrates. This chain is DNA-directed RNA polymerase subunit alpha, found in Pelagibacter ubique (strain HTCC1062).